The sequence spans 285 residues: MARCO-like protein (285 aa).

The first 20 residues, 1–20, serve as a signal peptide directing secretion; sequence MRAFIFFLFMLLAMFSASST. A glycan (N-linked (GlcNAc...) asparagine) is linked at Asn24. Disordered regions lie at residues 47 to 77 and 91 to 285; these read NHLG…GQPG and GRAG…QGNL. 2 stretches are compositionally biased toward polar residues: residues 57–67 and 105–114; these read KQGGSYTQGNP and SGKSNQKGNP. The span at 115–128 shows a compositional bias: low complexity; it reads ESSNKQENSGSSSQ. Over residues 134 to 145 the composition is skewed to polar residues; the sequence is ISTQQGNPGSSD. The segment covering 160-173 has biased composition (low complexity); that stretch reads GSSSQQGKPGSSSQ. Polar residues predominate over residues 174–185; the sequence is HGNLGSSTQKGN. Residues 186-220 are compositionally biased toward low complexity; sequence LGSSSLQGHLGLSSHQGKPESSGQQGKPGSSSQQG. A compositionally biased stretch (polar residues) spans 221–285; sequence NLGTSGQQEK…PGSSSRQGNL (65 aa).

This chain is MARCO-like protein, found in Homo sapiens (Human).